A 646-amino-acid chain; its full sequence is Mitochondrial distribution and morphology protein 10 (646 aa).

2 disordered regions span residues 206–230 (KSTSSSMDRLDSSNPSLSSSTSLSN) and 315–347 (ETSSSASYPQRNGSVLHTGSSSSSEDTEAGGGL). Residues 207 to 230 (STSSSMDRLDSSNPSLSSSTSLSN) show a composition bias toward low complexity. Residues 315–333 (ETSSSASYPQRNGSVLHTG) show a composition bias toward polar residues.

It belongs to the MDM10 family. As to quaternary structure, component of the ER-mitochondria encounter structure (ERMES) or MDM complex, composed of MMM1, MDM10, MDM12 and MDM34. Associates with the mitochondrial outer membrane sorting assembly machinery SAM(core) complex.

The protein resides in the mitochondrion outer membrane. In terms of biological role, component of the ERMES/MDM complex, which serves as a molecular tether to connect the endoplasmic reticulum and mitochondria. Components of this complex are involved in the control of mitochondrial shape and protein biogenesis and may function in phospholipid exchange. MDM10 is involved in the late assembly steps of the general translocase of the mitochondrial outer membrane (TOM complex). Functions in the TOM40-specific route of the assembly of outer membrane beta-barrel proteins, including the association of TOM40 with the receptor TOM22 and small TOM proteins. Can associate with the SAM(core) complex as well as the MDM12-MMM1 complex, both involved in late steps of the major beta-barrel assembly pathway, that is responsible for biogenesis of all outer membrane beta-barrel proteins. May act as a switch that shuttles between both complexes and channels precursor proteins into the TOM40-specific pathway. Plays a role in mitochondrial morphology and in the inheritance of mitochondria. This is Mitochondrial distribution and morphology protein 10 from Mycosarcoma maydis (Corn smut fungus).